The chain runs to 715 residues: Phosphatidylinositol 4-phosphate 5-kinase 6 (715 aa).

The span at 1-13 (MSVAHADDADDYS) shows a compositional bias: basic and acidic residues. The tract at residues 1–21 (MSVAHADDADDYSRPTGESYH) is disordered. 8 MORN repeats span residues 32–54 (YTGQ…DGCM), 55–77 (YVGD…SGAT), 78–100 (YEGD…SGDL), 101–123 (YRGS…NGDC), 124–146 (YDGE…NENH), 147–169 (YIGQ…NGNR), 170–192 (YDGS…DGSF), and 193–214 (YVGV…STSS). The interval 253 to 306 (GASEQSSSGNRTKNSERPRRRSVDGRVSNGEMELRSNGSGYLQVDDNAESTRSS) is disordered. Residues 255 to 264 (SEQSSSGNRT) are compositionally biased toward polar residues. Positions 265 to 276 (KNSERPRRRSVD) are enriched in basic and acidic residues. One can recognise a PIPK domain in the interval 321-711 (TISKGHKNYE…RFRDFIFRVF (391 aa)). Residues 671–692 (YDISKKLEHAYKSMQYDPTSIS) form an activation loop region.

The enzyme catalyses a 1,2-diacyl-sn-glycero-3-phospho-(1D-myo-inositol 4-phosphate) + ATP = a 1,2-diacyl-sn-glycero-3-phospho-(1D-myo-inositol-4,5-bisphosphate) + ADP + H(+). In Arabidopsis thaliana (Mouse-ear cress), this protein is Phosphatidylinositol 4-phosphate 5-kinase 6 (PIP5K6).